Reading from the N-terminus, the 587-residue chain is Phosphomethylpyrimidine synthase (587 aa).

Residues N218, M247, Y276, H312, 332-334, 373-376, and E412 each bind substrate; these read SRG and DGLR. Position 416 (H416) interacts with Zn(2+). Residue Y439 coordinates substrate. Zn(2+) is bound at residue H480. C560, C563, and C568 together coordinate [4Fe-4S] cluster.

Belongs to the ThiC family. The cofactor is [4Fe-4S] cluster.

It catalyses the reaction 5-amino-1-(5-phospho-beta-D-ribosyl)imidazole + S-adenosyl-L-methionine = 4-amino-2-methyl-5-(phosphooxymethyl)pyrimidine + CO + 5'-deoxyadenosine + formate + L-methionine + 3 H(+). The protein operates within cofactor biosynthesis; thiamine diphosphate biosynthesis. Catalyzes the synthesis of the hydroxymethylpyrimidine phosphate (HMP-P) moiety of thiamine from aminoimidazole ribotide (AIR) in a radical S-adenosyl-L-methionine (SAM)-dependent reaction. This chain is Phosphomethylpyrimidine synthase, found in Porphyromonas gingivalis (strain ATCC BAA-308 / W83).